Here is a 270-residue protein sequence, read N- to C-terminus: Cell surface glycoprotein CD200 receptor 4 (270 aa).

Residues 1-25 (MHALGRIPTLTLLIFINIFVSGSSC) form the signal peptide. The Ig-like V-type domain maps to 26 to 145 (TDENQTIQND…GNLEKVYDLQ (120 aa)). Residues 26–241 (TDENQTIQND…TMTTPRSLLT (216 aa)) are Extracellular-facing. Residues N29 and N44 are each glycosylated (N-linked (GlcNAc...) asparagine). 4 disulfides stabilise this stretch: C58–C129, C82–C97, C164–C213, and C183–C201. The 96-residue stretch at 134-229 (PEGNLEKVYD…GNQSLSIELS (96 aa)) folds into the Ig-like C2-type domain. N192 carries an N-linked (GlcNAc...) asparagine glycan. Residues 242–262 (ILYVKMALLVIILLNVGFAFF) traverse the membrane as a helical segment. Over 263–270 (QKRNFART) the chain is Cytoplasmic.

It belongs to the CD200R family. As to quaternary structure, interacts with TYROBP. Highly expressed in monocytes, NK cells and a subset of NKT cells. Weakly expressed in granulocytes and B-cells (at protein level). Expressed in brain, lung, testis, thymus, intestine and uterus. Expressed in bone marrow derived-macrophage and dendritic cells and mast cells.

Its subcellular location is the membrane. Its function is as follows. Involved in the recruitment or surface expression of the TYROBP receptor. In Mus musculus (Mouse), this protein is Cell surface glycoprotein CD200 receptor 4 (Cd200r4).